Consider the following 110-residue polypeptide: Protein mistic (110 aa).

Residues 1-7 (MFCTFFE) lie on the Cytoplasmic side of the membrane. A helical transmembrane segment spans residues 8 to 22 (KHHRKWDILLEKSTG). At 23–31 (VMEAMKVTS) the chain is on the extracellular side. The chain crosses the membrane as a helical span at residues 32–55 (EEKEQLSTAIDRMNEGLDAFIQLY). The Cytoplasmic segment spans residues 56 to 66 (NESEIDEPLIQ). A helical membrane pass occupies residues 67-81 (LDDDTAELMKQARDM). The Extracellular portion of the chain corresponds to 82–88 (YGQEKLN). The chain crosses the membrane as a helical span at residues 89 to 102 (EKLNTIIKQILSIS). At 103 to 110 (VSEEGEKE) the chain is on the cytoplasmic side.

In terms of assembly, monomer.

It localises to the cell membrane. Chaperone that facilitates the production and integration of integral membrane proteins into the bacterial lipid bilayer. This is Protein mistic (mstX) from Bacillus subtilis (strain 168).